The following is a 59-amino-acid chain: U-actitoxin-Aer2b (59 aa).

Contains 5 disulfide bonds.

The protein localises to the secreted. The protein resides in the nematocyst. In Anemonia erythraea (Sea anemone), this protein is U-actitoxin-Aer2b.